The sequence spans 315 residues: Protein FRA10AC1 homolog (315 aa).

An N-acetylmethionine modification is found at M1. Residues 1 to 28 (MHGHGGYDSDFSDDEQGGGSSKKRKKTV) are disordered. 2 positions are modified to phosphoserine: S9 and S12. K36 bears the N6-acetyllysine mark. The segment covering 225 to 235 (KEIKSTKKKSK) has biased composition (basic residues). Residues 225 to 308 (KEIKSTKKKS…EKSQEEEFDD (84 aa)) are disordered. 2 stretches are compositionally biased toward basic and acidic residues: residues 236–245 (TTPECDESPR) and 255–278 (EASK…NRNA). Phosphoserine occurs at positions 283 and 285.

In terms of assembly, interacts with ESS2.

It is found in the nucleus. May be involved in pre-mRNA splicing. This chain is Protein FRA10AC1 homolog (Fra10ac1), found in Mus musculus (Mouse).